A 396-amino-acid polypeptide reads, in one-letter code: Ornithine aminotransferase (396 aa).

Position 255 is an N6-(pyridoxal phosphate)lysine (Lys255).

The protein belongs to the class-III pyridoxal-phosphate-dependent aminotransferase family. OAT subfamily. It depends on pyridoxal 5'-phosphate as a cofactor.

The protein localises to the cytoplasm. It carries out the reaction a 2-oxocarboxylate + L-ornithine = L-glutamate 5-semialdehyde + an L-alpha-amino acid. The protein operates within amino-acid biosynthesis; L-proline biosynthesis; L-glutamate 5-semialdehyde from L-ornithine: step 1/1. Its function is as follows. Catalyzes the interconversion of ornithine to glutamate semialdehyde. The protein is Ornithine aminotransferase of Bacillus cereus (strain 03BB102).